We begin with the raw amino-acid sequence, 534 residues long: Probable alkaline/neutral invertase D (534 aa).

Phosphoserine is present on residues S7 and S37. T55 carries the post-translational modification Phosphothreonine. The residue at position 532 (S532) is a Phosphoserine.

Belongs to the glycosyl hydrolase 100 family.

It catalyses the reaction Hydrolysis of terminal non-reducing beta-D-fructofuranoside residues in beta-D-fructofuranosides.. Invertase that cleaves sucrose into glucose and fructose. This chain is Probable alkaline/neutral invertase D, found in Arabidopsis thaliana (Mouse-ear cress).